The chain runs to 118 residues: Small ribosomal subunit protein mS41 (118 aa).

Residues 1–24 (MLRVVAKAQYPAAVRCFSTSHAAF) constitute a mitochondrion transit peptide.

The protein belongs to the mitochondrion-specific ribosomal protein mS41 family.

It is found in the mitochondrion. Functionally, involved in telomere length regulation. This chain is Small ribosomal subunit protein mS41 (FYV4), found in Yarrowia lipolytica (strain CLIB 122 / E 150) (Yeast).